The following is a 757-amino-acid chain: Amine oxidase [copper-containing] 2 (757 aa).

Residues 1 to 4 (MNLK) are Cytoplasmic-facing. Residues 5–25 (VLLLLLGLSFLTVFALVYVLL) form a helical membrane-spanning segment. Over 26-757 (TRQGSFSQSP…NLPSFSYEGL (732 aa)) the chain is Extracellular. 3 N-linked (GlcNAc...) asparagine glycosylation sites follow: Asn133, Asn198, and Asn226. Asp381 acts as the Proton acceptor in catalysis. Cys399 and Cys425 are joined by a disulfide. Tyr466 (schiff-base intermediate with substrate; via topaquinone) is an active-site residue. Tyr466 is modified (2',4',5'-topaquinone). Positions 517 and 519 each coordinate Cu(2+). The Ca(2+) site is built by Asp526, Leu527, Asp528, Glu569, Glu638, Phe660, and Asn662. Asn663 carries an N-linked (GlcNAc...) asparagine glycan. Ca(2+) is bound by residues Glu664, Asp670, and Leu671. Residue His681 coordinates Cu(2+). A disulfide bridge connects residues Cys731 and Cys738.

This sequence belongs to the copper/topaquinone oxidase family. As to quaternary structure, homodimer; disulfide-linked. Probably forms heterodimers with AOC3. The cofactor is Cu(2+). Requires Ca(2+) as cofactor. L-topaquinone serves as cofactor. Post-translationally, topaquinone (TPQ) is generated by copper-dependent autoxidation of a specific tyrosyl residue. As to expression, significantly much highly expressed in retina.

Its subcellular location is the cell membrane. The catalysed reaction is 2-phenylethylamine + O2 + H2O = 2-phenylacetaldehyde + H2O2 + NH4(+). It catalyses the reaction tryptamine + O2 + H2O = indole-3-acetaldehyde + H2O2 + NH4(+). The enzyme catalyses tyramine + O2 + H2O = (4-hydroxyphenyl)acetaldehyde + H2O2 + NH4(+). In terms of biological role, catalyzes the oxidative deamination of primary amines to the corresponding aldehydes with the concomitant production of hydrogen peroxide and ammonia. Has a preference for 2-phenylethylamine, tryptamine and tyramine. Could also act on methylamine and benzylamine but much less efficiently. The chain is Amine oxidase [copper-containing] 2 from Mus musculus (Mouse).